The following is an 87-amino-acid chain: Small ribosomal subunit protein uS17 (87 aa).

The protein belongs to the universal ribosomal protein uS17 family. Part of the 30S ribosomal subunit.

Functionally, one of the primary rRNA binding proteins, it binds specifically to the 5'-end of 16S ribosomal RNA. This chain is Small ribosomal subunit protein uS17, found in Bacillus licheniformis (strain ATCC 14580 / DSM 13 / JCM 2505 / CCUG 7422 / NBRC 12200 / NCIMB 9375 / NCTC 10341 / NRRL NRS-1264 / Gibson 46).